The primary structure comprises 964 residues: DNA primase (964 aa).

Residues 807 to 844 (SAPSLPTLVGRGGGGEGGASSDYEEERAVGSDEEEDDD) are disordered.

It belongs to the herpesviridae DNA primase family. In terms of assembly, associates with the helicase and the primase-associated factor to form the helicase-primase factor.

It is found in the host nucleus. Functionally, essential component of the helicase/primase complex. Unwinds the DNA at the replication forks and generates single-stranded DNA for both leading and lagging strand synthesis. The primase initiates primer synthesis and thereby produces large amount of short RNA primers on the lagging strand that the polymerase elongates using dNTPs. This is DNA primase (UL70) from Mus musculus (Mouse).